We begin with the raw amino-acid sequence, 338 residues long: MEKQTVAVLGPGSWGTALSQVLNDNGHEVRIWGNLPEQINEINTHHTNKHYFKDVVLDENIIAYTDLAETLKDVDAILFVVPTKVTRLVAQQVAQTLDHKVIIMHASKGLEPDSHKRLSTILEEEIPEHLRSDIVVVSGPSHAEETIVRDLTLITAASKDLQTAQYVQELFSNHYFRLYTNTDVIGVETAGALKNIIAVGAGALHGLGFGDNAKAAIIARGLAEITRLGVALGASPLTYSGLSGVGDLIVTGTSIHSRNWRAGDALGRGESLADIEANMGMVIEGISTTRAAYELAQELGVYMPITQAIYQVIYHGTNIKDAIYDIMNNEFKAENEWS.

Positions 13, 14, and 108 each coordinate NADPH. Lys108, Gly139, and Ser141 together coordinate sn-glycerol 3-phosphate. Residue Ala143 participates in NADPH binding. Sn-glycerol 3-phosphate-binding residues include Lys194, Asp247, Ser257, Arg258, and Asn259. Residue Lys194 is the Proton acceptor of the active site. Residue Arg258 coordinates NADPH. Val282 and Glu284 together coordinate NADPH.

The protein belongs to the NAD-dependent glycerol-3-phosphate dehydrogenase family.

Its subcellular location is the cytoplasm. The catalysed reaction is sn-glycerol 3-phosphate + NAD(+) = dihydroxyacetone phosphate + NADH + H(+). The enzyme catalyses sn-glycerol 3-phosphate + NADP(+) = dihydroxyacetone phosphate + NADPH + H(+). Its pathway is membrane lipid metabolism; glycerophospholipid metabolism. In terms of biological role, catalyzes the reduction of the glycolytic intermediate dihydroxyacetone phosphate (DHAP) to sn-glycerol 3-phosphate (G3P), the key precursor for phospholipid synthesis. The sequence is that of Glycerol-3-phosphate dehydrogenase [NAD(P)+] from Streptococcus pneumoniae (strain Hungary19A-6).